Reading from the N-terminus, the 198-residue chain is Elongation factor Ts (198 aa).

Residues 81–84 (TDFV) are involved in Mg(2+) ion dislocation from EF-Tu.

The protein belongs to the EF-Ts family.

It is found in the cytoplasm. In terms of biological role, associates with the EF-Tu.GDP complex and induces the exchange of GDP to GTP. It remains bound to the aminoacyl-tRNA.EF-Tu.GTP complex up to the GTP hydrolysis stage on the ribosome. The chain is Elongation factor Ts from Dictyoglomus thermophilum (strain ATCC 35947 / DSM 3960 / H-6-12).